The sequence spans 538 residues: Syncytin-1 (538 aa).

Positions 1-20 (MALPYHIFLFTVLLPSFTLT) are cleaved as a signal peptide. At 21–443 (APPPCRCMTS…NTGPWGLLSQ (423 aa)) the chain is on the extracellular side. An N-linked (GlcNAc...) asparagine glycan is attached at Asn-169. A CXXC motif is present at residues 186–189 (CWIC). 3 disulfide bridges follow: Cys-186–Cys-189, Cys-186–Cys-405, and Cys-397–Cys-404. N-linked (GlcNAc...) asparagine glycans are attached at residues Asn-208, Asn-214, Asn-234, Asn-242, and Asn-281. The fusion peptide stretch occupies residues 320–340 (ILPFVIGAGVLGALGTGIGGI). Positions 380 to 396 (LQNRRALDLLTAERGGT) are immunosuppression. Residues 397-406 (CLFLGEECCY) carry the CX6CC motif. N-linked (GlcNAc...) asparagine glycosylation occurs at Asn-409. The chain crosses the membrane as a helical span at residues 444 to 464 (WMPWILPFLGPLAAIILLLLF). Positions 465–484 (GPCIFNLLVNFVSSRIEAVK) are essential for the fusiogenic function. Over 465–538 (GPCIFNLLVN…LLRPNSAGSS (74 aa)) the chain is Cytoplasmic. Positions 496–538 (KIYRRPLDRPASPRSDVNDIKGTPPEEISAAQPLLRPNSAGSS) are disordered.

Belongs to the gamma type-C retroviral envelope protein family. HERV class-I W env subfamily. The mature envelope protein (Env) consists of a trimer of SU-TM heterodimers attached probably by a labile interchain disulfide bond. Interacts with the C-type lectin CD209/DC-SIGN. Post-translationally, specific enzymatic cleavages in vivo yield mature proteins. Envelope glycoproteins are synthesized as an inactive precursor that is heavily N-glycosylated and processed likely by furin in the Golgi to yield the mature SU and TM proteins. The cleavage site between SU and TM requires the minimal sequence [KR]-X-[KR]-R. The intracytoplasmic tail cleavage by the viral protease that is required for the fusiogenic activity of some retroviruses envelope proteins seems to have been lost during evolution. The CXXC motif is highly conserved across a broad range of retroviral envelope proteins. It is thought to participate in the formation of a labile disulfide bond possibly with the CX6CC motif present in the transmembrane protein. Isomerization of the intersubunit disulfide bond to an SU intrachain disulfide bond is thought to occur upon receptor recognition in order to allow membrane fusion. In terms of tissue distribution, expressed at higher level in placental syncytiotrophoblast. Expressed at intermediate level in testis. Seems also to be found at low level in adrenal tissue, bone marrow, breast, colon, kidney, ovary, prostate, skin, spleen, thymus, thyroid, brain and trachea. Both mRNA and protein levels are significantly increased in the brain of individuals with multiple sclerosis, particularly in astrocytes and microglia.

It is found in the cell membrane. The protein resides in the virion. This endogenous retroviral envelope protein has retained its original fusogenic properties and participates in trophoblast fusion and the formation of a syncytium during placenta morphogenesis. May induce fusion through binding of SLC1A4 and SLC1A5. Functionally, endogenous envelope proteins may have kept, lost or modified their original function during evolution. Retroviral envelope proteins mediate receptor recognition and membrane fusion during early infection. The surface protein (SU) mediates receptor recognition, while the transmembrane protein (TM) acts as a class I viral fusion protein. The protein may have at least 3 conformational states: pre-fusion native state, pre-hairpin intermediate state, and post-fusion hairpin state. During viral and target cell membrane fusion, the coiled coil regions (heptad repeats) assume a trimer-of-hairpins structure, positioning the fusion peptide in close proximity to the C-terminal region of the ectodomain. The formation of this structure appears to drive apposition and subsequent fusion of membranes. The sequence is that of Syncytin-1 (ERVW-1) from Homo sapiens (Human).